The sequence spans 522 residues: Colicin-E1 (522 aa).

2 disordered regions span residues 26–52 and 136–165; these read NGTP…AAIH and EEKA…REKA. Residues 30–42 are compositionally biased toward gly residues; it reads DGSGSGGGGGKGG. 2 helical membrane-spanning segments follow: residues 471–487 and 494–510; these read AADA…FSLL and IWGI…YIDK.

The protein belongs to the channel forming colicin family.

The protein resides in the cell membrane. In terms of biological role, this colicin is a channel-forming colicin. This class of transmembrane toxins depolarize the cytoplasmic membrane, leading to dissipation of cellular energy. Its function is as follows. Colicins are polypeptide toxins produced by and active against E.coli and closely related bacteria. In Escherichia coli, this protein is Colicin-E1 (cea).